Consider the following 341-residue polypeptide: Protein-glutamate methylesterase/protein-glutamine glutaminase 1 (341 aa).

The region spanning 2–119 (KVGIVNDSAL…SDAKLTAGPL (118 aa)) is the Response regulatory domain. Asp-53 bears the 4-aspartylphosphate mark. In terms of domain architecture, CheB-type methylesterase spans 146–331 (TLAASRLVAI…LTAIAPRLVQ (186 aa)). Catalysis depends on residues Ser-158, His-185, and Asp-278.

It belongs to the CheB family. Phosphorylated by CheA. Phosphorylation of the N-terminal regulatory domain activates the methylesterase activity.

It is found in the cytoplasm. The catalysed reaction is [protein]-L-glutamate 5-O-methyl ester + H2O = L-glutamyl-[protein] + methanol + H(+). It carries out the reaction L-glutaminyl-[protein] + H2O = L-glutamyl-[protein] + NH4(+). Functionally, involved in chemotaxis. Part of a chemotaxis signal transduction system that modulates chemotaxis in response to various stimuli. Catalyzes the demethylation of specific methylglutamate residues introduced into the chemoreceptors (methyl-accepting chemotaxis proteins or MCP) by CheR. Also mediates the irreversible deamidation of specific glutamine residues to glutamic acid. The sequence is that of Protein-glutamate methylesterase/protein-glutamine glutaminase 1 from Cupriavidus pinatubonensis (strain JMP 134 / LMG 1197) (Cupriavidus necator (strain JMP 134)).